Consider the following 231-residue polypeptide: Putative S-adenosylmethionine-dependent methyltransferase RcsF (231 aa).

The region spanning 5–142 (VSPIGYIRSC…YVPYADAVAD (138 aa)) is the TsaA-like domain. Residues 22 to 24 (PRQ), 63 to 64 (HQ), Arg91, and 122 to 125 (LDGT) contribute to the S-adenosyl-L-methionine site.

This sequence belongs to the tRNA methyltransferase O family.

In Pseudomonas aeruginosa (strain ATCC 15692 / DSM 22644 / CIP 104116 / JCM 14847 / LMG 12228 / 1C / PRS 101 / PAO1), this protein is Putative S-adenosylmethionine-dependent methyltransferase RcsF (rcsF).